A 168-amino-acid polypeptide reads, in one-letter code: Putative apoptosis regulator A9 (168 aa).

Residues 143 to 162 form a helical membrane-spanning segment; the sequence is SAFYFLTAAASCLTLLLLYF.

It is found in the host membrane. Functionally, suppresses apoptosis in host cell and thus facilitates production of progeny virions. The chain is Putative apoptosis regulator A9 (A9) from Alcelaphine herpesvirus 1 (strain C500) (AlHV-1).